The chain runs to 565 residues: MANSPFPLRSQVVTQGVQRSPNRAMLRAVGFRDEDFGKPIVGIANAHSTLTPCNMGIQTLAERAEAALRTAGCMPQVFGTITISDGISMGTEGMKYSLVSREVIADSIETVVNGQSMDGLLAIGGCDKNMPGAMIAMARLNVPSIFVYGGTIKPGHYNGRDLTIVSAFEAVGEFSAGRISEEELLAVERHACPGAGSCGGMYTANTMSSAFEAMGMSLPYSSTMAAEDEEKAESAAQSAKVLAEAIKANIRPRDIITRKSIENAISVIMAVGGSTNAVLHFLAIAHAAEVPLTLDDFETIRARVPVLCDLKPSGRFVATDLHRAGGIPQVMKMLLNHGLLHGDCLTISGQTIVEVLRDVPDEPSPDQEVIRPWHSPLYPQGHLAILKGNLAPEGAVAKITGVKNPQITGPARVFDSEESCLQAILSGQIRAGDVVVIRYEGPKGGPGMREMLSPTSAIIGAGLGDSVGLITDGRFSGGTYGMVVGHVAPEAYVGGTIALVEEGDLITIDAPARQLHLHVSEEELARRRARWSPPEPRYKRGTLAKYAKLVSSSSLGAVTDLNLWD.

Cys-53 serves as a coordination point for [2Fe-2S] cluster. Position 85 (Asp-85) interacts with Mg(2+). Cys-126 contributes to the [2Fe-2S] cluster binding site. Residues Asp-127 and Lys-128 each contribute to the Mg(2+) site. At Lys-128 the chain carries N6-carboxylysine. Cys-198 lines the [2Fe-2S] cluster pocket. Glu-450 is a Mg(2+) binding site. Ser-476 serves as the catalytic Proton acceptor.

This sequence belongs to the IlvD/Edd family. As to quaternary structure, homodimer. Requires [2Fe-2S] cluster as cofactor. Mg(2+) is required as a cofactor.

It carries out the reaction (2R)-2,3-dihydroxy-3-methylbutanoate = 3-methyl-2-oxobutanoate + H2O. The enzyme catalyses (2R,3R)-2,3-dihydroxy-3-methylpentanoate = (S)-3-methyl-2-oxopentanoate + H2O. It participates in amino-acid biosynthesis; L-isoleucine biosynthesis; L-isoleucine from 2-oxobutanoate: step 3/4. The protein operates within amino-acid biosynthesis; L-valine biosynthesis; L-valine from pyruvate: step 3/4. Functionally, functions in the biosynthesis of branched-chain amino acids. Catalyzes the dehydration of (2R,3R)-2,3-dihydroxy-3-methylpentanoate (2,3-dihydroxy-3-methylvalerate) into 2-oxo-3-methylpentanoate (2-oxo-3-methylvalerate) and of (2R)-2,3-dihydroxy-3-methylbutanoate (2,3-dihydroxyisovalerate) into 2-oxo-3-methylbutanoate (2-oxoisovalerate), the penultimate precursor to L-isoleucine and L-valine, respectively. This Synechococcus sp. (strain JA-2-3B'a(2-13)) (Cyanobacteria bacterium Yellowstone B-Prime) protein is Dihydroxy-acid dehydratase.